The following is a 237-amino-acid chain: ATP synthase subunit a (237 aa).

6 helical membrane-spanning segments follow: residues 18-38, 77-97, 103-123, 132-152, 185-205, and 209-229; these read STLW…VGTL, IFTL…PMAF, IAVT…LGFM, LFWV…IEVI, LILF…AIVA, and LEIL…CVYL.

Belongs to the ATPase A chain family. F-type ATPases have 2 components, CF(1) - the catalytic core - and CF(0) - the membrane proton channel. CF(1) has five subunits: alpha(3), beta(3), gamma(1), delta(1), epsilon(1). CF(0) has three main subunits: a(1), b(2) and c(9-12). The alpha and beta chains form an alternating ring which encloses part of the gamma chain. CF(1) is attached to CF(0) by a central stalk formed by the gamma and epsilon chains, while a peripheral stalk is formed by the delta and b chains.

Its subcellular location is the cellular chromatophore membrane. In terms of biological role, key component of the proton channel; it plays a direct role in the translocation of protons across the membrane. This is ATP synthase subunit a from Rhodobacter capsulatus (Rhodopseudomonas capsulata).